The chain runs to 57 residues: Large ribosomal subunit protein bL32 (57 aa).

This sequence belongs to the bacterial ribosomal protein bL32 family.

The chain is Large ribosomal subunit protein bL32 from Streptomyces avermitilis (strain ATCC 31267 / DSM 46492 / JCM 5070 / NBRC 14893 / NCIMB 12804 / NRRL 8165 / MA-4680).